The chain runs to 1023 residues: Peroxisome proliferator-activated receptor gamma coactivator 1-beta (1023 aa).

The abolishes DNA transcriptional activity when missing stretch occupies residues 1-91 (MAGNDCGALL…LFQIDSENEA (91 aa)). The tract at residues 122–148 (LSCTSASPAPSSAPPSPAPEKPSAPAP) is disordered. The span at 132–146 (SSAPPSPAPEKPSAP) shows a compositional bias: pro residues. An LXXLL motif 1 motif is present at residues 156–160 (LQKLL). 3 disordered regions span residues 165–210 (YPTS…QSQS), 237–278 (LQSP…PGAP), and 302–331 (RKLP…WSRH). The LXXLL motif 2 motif lies at 343–347 (LRELL). 4 disordered regions span residues 369–463 (LTPR…LPWT), 520–567 (RELG…QLPP), 601–623 (TAGL…FKPD), and 636–683 (LPSP…GQKR). The residue at position 384 (S384) is a Phosphoserine. The span at 412-422 (LRLEVKREVRR) shows a compositional bias: basic and acidic residues. A compositionally biased stretch (acidic residues) spans 429–450 (QEEEDEEEEEEEEEEEKEEEEE). At S524 the chain carries Phosphoserine. Positions 614–623 (PTEEDPFKPD) are enriched in basic and acidic residues. S638 is subject to Phosphoserine. Residues 691–694 (DHDY) carry the HCFC1-binding-motif (HBM) motif. Disordered stretches follow at residues 717-758 (VHLE…LRDH) and 779-867 (DLAS…WSPA). Low complexity predominate over residues 793 to 805 (EDSSSSSGESSFL). Positions 806–825 (PEEEEEEGEEEEEDDEEEDS) are enriched in acidic residues. Over residues 849-866 (CSRSRSSSGSSPCHSWSP) the composition is skewed to low complexity. Residues 902–976 (RVVYIQNLSS…RNEPSFQLSY (75 aa)) enclose the RRM domain.

In terms of assembly, interacts with hepatocyte nuclear factor 4-alpha/HNF4A, Sterol regulatory binding transcription factor 1/SREBF1, PPAR-alpha/PPARA, thyroid hormone receptor beta/THRB and host cell factor/HCFC1. Interacts with estrogen-related receptor gamma/ESRRG and alpha/ESRRA. Interacts with PRDM16. Interacts with estrogen receptor alpha/ESR1. Ubiquitous with higher expression in heart, brain and skeletal muscle.

The protein localises to the nucleus. Its function is as follows. Plays a role of stimulator of transcription factors and nuclear receptors activities. Activates transcriptional activity of estrogen receptor alpha, nuclear respiratory factor 1 (NRF1) and glucocorticoid receptor in the presence of glucocorticoids. May play a role in constitutive non-adrenergic-mediated mitochondrial biogenesis as suggested by increased basal oxygen consumption and mitochondrial number when overexpressed. May be involved in fat oxidation and non-oxidative glucose metabolism and in the regulation of energy expenditure. Induces the expression of PERM1 in the skeletal muscle in an ESRRA-dependent manner. In Homo sapiens (Human), this protein is Peroxisome proliferator-activated receptor gamma coactivator 1-beta (PPARGC1B).